A 271-amino-acid polypeptide reads, in one-letter code: uncharacterized protein (271 aa).

Solcar repeat units follow at residues 3-74 (VQTL…AKRR), 81-163 (EGAI…SKKY), and 171-268 (DISV…FKSK). 6 helical membrane-spanning segments follow: residues 5–26 (TLMAASAGAVASRLLCHPIDTI), 49–69 (GLPISLTLITPATCLYLSTYV), 84–104 (ILYSICGMTAEVVSSFVWTPL), 138–158 (GYWMGVAIYLPTTVSWWVCYE), 170–190 (WDISVIAPICSALGTVVATTI), and 240–261 (FTRGLFTRMCYIMPSGMISMSV).

It belongs to the mitochondrial carrier (TC 2.A.29) family.

The protein localises to the mitochondrion inner membrane. This is an uncharacterized protein from Schizosaccharomyces pombe (strain 972 / ATCC 24843) (Fission yeast).